The sequence spans 210 residues: Large ribosomal subunit protein uL3 (210 aa).

A disordered region spans residues 126 to 167 (WGFQRGPSGHGSKNIREPGSTGNATFPGRVIKGKKMPGQKGN). A compositionally biased stretch (basic residues) spans 156–167 (IKGKKMPGQKGN).

This sequence belongs to the universal ribosomal protein uL3 family. As to quaternary structure, part of the 50S ribosomal subunit. Forms a cluster with proteins L14 and L19.

In terms of biological role, one of the primary rRNA binding proteins, it binds directly near the 3'-end of the 23S rRNA, where it nucleates assembly of the 50S subunit. This is Large ribosomal subunit protein uL3 from Syntrophobacter fumaroxidans (strain DSM 10017 / MPOB).